The chain runs to 24 residues: AQITLTNKASYTVTPPAQANAADA.

The protein belongs to the thaumatin family. Homooligomer; disulfide-linked. Post-translationally, glycosylated.

Its subcellular location is the secreted. It is found in the extracellular space. The protein localises to the apoplast. The chain is 33.0 kDa cold shock protein from Arachis hypogaea (Peanut).